The primary structure comprises 120 residues: U15-barytoxin-Tl1c (120 aa).

A signal peptide spans 1-16; sequence MKLFMVLVASFAFAVA. Cystine bridges form between Cys-55/Cys-73, Cys-66/Cys-79, Cys-70/Cys-118, and Cys-72/Cys-89.

Belongs to the neurotoxin 03 (Tx2) family. 03 subfamily. As to expression, expressed by the venom gland.

It localises to the secreted. Its function is as follows. Ion channel inhibitor. The sequence is that of U15-barytoxin-Tl1c from Trittame loki (Brush-footed trapdoor spider).